Reading from the N-terminus, the 357-residue chain is tRNA pseudouridine synthase B (357 aa).

The active-site Nucleophile is the Asp42.

This sequence belongs to the pseudouridine synthase TruB family. Type 1 subfamily.

The enzyme catalyses uridine(55) in tRNA = pseudouridine(55) in tRNA. Functionally, responsible for synthesis of pseudouridine from uracil-55 in the psi GC loop of transfer RNAs. This chain is tRNA pseudouridine synthase B, found in Treponema denticola (strain ATCC 35405 / DSM 14222 / CIP 103919 / JCM 8153 / KCTC 15104).